A 488-amino-acid polypeptide reads, in one-letter code: N-acyl-D-glutamate deacylase (488 aa).

Belongs to the metallo-dependent hydrolases superfamily. N-acyl-D-amino-acid deacylase family. The cofactor is Zn(2+).

The protein resides in the cytoplasm. The enzyme catalyses an N-acyl-D-glutamate + H2O = D-glutamate + a carboxylate. Inhibited by cobalt, copper and EDTA. The polypeptide is N-acyl-D-glutamate deacylase (Alcaligenes xylosoxydans xylosoxydans (Achromobacter xylosoxidans)).